We begin with the raw amino-acid sequence, 194 residues long: MSISKKIVFVTGNAKKLEEALQILGTSFPIESKKVDLPELQGDPIDISIEKCKIAAREVGGPVLVEDTCLCFNALKGLPGPYVKWFLDKLEPEGLYKLLDAWEDKSAYALCNFAFSEGPDSEPIVFAGKTDGIIVQPRGPRNFGWDPVFQPDGYKETYAEMDKSIKNTISHRTRSLQKVKEFLKSKGYENCKFE.

An ITP-binding site is contributed by 11–16 (TGNAKK). E39 is a binding site for Mg(2+). ITP-binding positions include K51, 67–68 (DT), K84, 143–146 (FGWD), K166, and 171–172 (HR).

The protein belongs to the HAM1 NTPase family. Homodimer. Mg(2+) serves as cofactor. It depends on Mn(2+) as a cofactor.

It is found in the cytoplasm. The enzyme catalyses ITP + H2O = IMP + diphosphate + H(+). It catalyses the reaction dITP + H2O = dIMP + diphosphate + H(+). It carries out the reaction XTP + H2O = XMP + diphosphate + H(+). Pyrophosphatase that hydrolyzes non-canonical purine nucleotides such as inosine triphosphate (ITP), deoxyinosine triphosphate (dITP) or xanthosine 5'-triphosphate (XTP) to their respective monophosphate derivatives. The enzyme does not distinguish between the deoxy- and ribose forms. Probably excludes non-canonical purines from RNA and DNA precursor pools, thus preventing their incorporation into RNA and DNA and avoiding chromosomal lesions. This Dictyostelium discoideum (Social amoeba) protein is Inosine triphosphate pyrophosphatase (itpa).